A 379-amino-acid polypeptide reads, in one-letter code: Cytochrome b (379 aa).

4 helical membrane passes run 33–53 (FGSLLGTCLVIQILTGLFLAM), 77–98 (WLIRYLHANGASMFFICLFIHV), 113–133 (WNIGIILFLTTMATAFVGYVL), and 178–198 (FFAFHFILPFIIAAFTLVHLL). Residues H83 and H97 each contribute to the heme b site. Positions 182 and 196 each coordinate heme b. Position 201 (H201) interacts with a ubiquinone. The next 4 helical transmembrane spans lie at 226–246 (TKDLLGIFLLLLALMILTLFF), 288–308 (LGGVLALILSILILATFPLLN), 320–340 (ITQTIYWIFIANLLVLTWIGG), and 347–367 (FTTIGQIASITYFAIIIILIP).

It belongs to the cytochrome b family. As to quaternary structure, the cytochrome bc1 complex contains 11 subunits: 3 respiratory subunits (MT-CYB, CYC1 and UQCRFS1), 2 core proteins (UQCRC1 and UQCRC2) and 6 low-molecular weight proteins (UQCRH/QCR6, UQCRB/QCR7, UQCRQ/QCR8, UQCR10/QCR9, UQCR11/QCR10 and a cleavage product of UQCRFS1). This cytochrome bc1 complex then forms a dimer. Heme b serves as cofactor.

The protein localises to the mitochondrion inner membrane. In terms of biological role, component of the ubiquinol-cytochrome c reductase complex (complex III or cytochrome b-c1 complex) that is part of the mitochondrial respiratory chain. The b-c1 complex mediates electron transfer from ubiquinol to cytochrome c. Contributes to the generation of a proton gradient across the mitochondrial membrane that is then used for ATP synthesis. The chain is Cytochrome b (MT-CYB) from Akodon azarae (Azara's grass mouse).